A 404-amino-acid polypeptide reads, in one-letter code: MASSINNSSQPTVPSISNNSHGDSFVNEGPPSNFKNNSLTSSTHSSTDHVNVLPISQDKEMDISSPVKKQKASYSNKSPNKAPIQKSRGSSLKSHLETESQQTPVKRRRRKATIRNVDYCSACGGRGLFICCEGCPCSFHLSCLEPPLTPENIPEGSWFCVTCSIKSHHPPKHPLSIWSQLYDWIDSQNPSQYRLPDDLVHYFHGISRGDTGAYKETEGEMDTDEFSALPTGSSITNLAYCGYCSKPSMGACWVYGCQLCDTFYHKNCKEHAKKCSHDSIGKKGMRVPKNAVVIRTPLVLDTTSNTLNPKVMISGWQFLMGEFPSDELLYFPRLPVSCLYKVSEDGLIKDFLYAIGIEAKKFNNERKKRELEVIPPDVKSALLPARTHPNLPIALRTLFNKART.

Polar residues predominate over residues 1–22 (MASSINNSSQPTVPSISNNSHG). The tract at residues 1-110 (MASSINNSSQ…QQTPVKRRRR (110 aa)) is disordered. Residue threonine 47 is modified to Phosphothreonine. Residues 87 to 104 (SRGSSLKSHLETESQQTP) show a composition bias toward polar residues. The PHD-type zinc-finger motif lies at 117 to 166 (VDYCSACGGRGLFICCEGCPCSFHLSCLEPPLTPENIPEGSWFCVTCSIK).

This is an uncharacterized protein from Schizosaccharomyces pombe (strain 972 / ATCC 24843) (Fission yeast).